The following is a 306-amino-acid chain: Pantothenate kinase (306 aa).

91–98 contributes to the ATP binding site; sequence GSVAVGKS.

It belongs to the prokaryotic pantothenate kinase family.

It localises to the cytoplasm. It carries out the reaction (R)-pantothenate + ATP = (R)-4'-phosphopantothenate + ADP + H(+). The protein operates within cofactor biosynthesis; coenzyme A biosynthesis; CoA from (R)-pantothenate: step 1/5. The protein is Pantothenate kinase of Streptococcus pneumoniae serotype 2 (strain D39 / NCTC 7466).